The sequence spans 820 residues: TORTIFOLIA1-like protein 2 (820 aa).

5 HEAT repeats span residues D61–G98, P102–C139, G146–E183, A187–A224, and S228–K265. Low complexity predominate over residues P304–S321. Disordered stretches follow at residues P304–A325, P357–D377, and G584–G644. A compositionally biased stretch (basic and acidic residues) spans Y367 to D377. The segment covering G584–K613 has biased composition (polar residues).

This Arabidopsis thaliana (Mouse-ear cress) protein is TORTIFOLIA1-like protein 2.